Consider the following 235-residue polypeptide: Putative cobalt transport protein CbiM 2 (235 aa).

A run of 7 helical transmembrane segments spans residues 8–28, 40–60, 74–94, 107–127, 135–155, 160–180, and 185–205; these read LPAI…AYGV, GILP…SLKM, GIGA…IVLI, TLGA…YLIY, LNFY…TYIV, LALA…SSFS, and IFAI…ALLF.

Belongs to the CbiM family. In terms of assembly, forms an energy-coupling factor (ECF) transporter complex composed of an ATP-binding protein (A component, CbiO), a transmembrane protein (T component, CbiQ) and 2 possible substrate-capture proteins (S components, CbiM and CbiN) of unknown stoichimetry.

It localises to the cell membrane. It participates in cofactor biosynthesis; adenosylcobalamin biosynthesis. In terms of biological role, part of the energy-coupling factor (ECF) transporter complex CbiMNOQ involved in cobalt import. This chain is Putative cobalt transport protein CbiM 2, found in Methanosarcina barkeri (strain Fusaro / DSM 804).